The following is a 333-amino-acid chain: Protein FLAP1 homolog A (333 aa).

A helical membrane pass occupies residues 26 to 46 (VVIIFVLAFTLVFTPTFEAEA). The interval 53–74 (IGGGSFRAPSAPSRSYSGPSGG) is disordered. Over residues 58–70 (FRAPSAPSRSYSG) the composition is skewed to low complexity. 2 helical membrane passes run 92-112 (IIPF…LVMI) and 261-281 (GEYI…LPAV).

Belongs to the FLAP family.

The protein localises to the cellular thylakoid membrane. Its subcellular location is the cell inner membrane. Essential for photosynthetic growth under fluctuating light by modulating PxcA- and PxcL-dependent intracellular pH regulation via proton transport (e.g. transient pH reduction upon transition from dark to light followed by an increase in the light until light-to-dark shift). In Synechocystis sp. (strain ATCC 27184 / PCC 6803 / Kazusa), this protein is Protein FLAP1 homolog A.